Consider the following 643-residue polypeptide: Clathrin interactor 1 (643 aa).

One can recognise an ENTH domain in the interval 16-149 (NVVMNYSEIE…QDDDRLREER (134 aa)). R29 serves as a coordination point for a 1,2-diacyl-sn-glycero-3-phospho-(1D-myo-inositol-4,5-bisphosphate). The tract at residues 52–54 (FMY) is interaction with VTI1B. R67 is a binding site for a 1,2-diacyl-sn-glycero-3-phospho-(1D-myo-inositol-4,5-bisphosphate). 2 interaction with VTI1B regions span residues 94–96 (SER) and 142–153 (DDRLREERKKAK). Residues S163, S166, S173, S205, S210, S227, S245, and S299 each carry the phosphoserine modification. Residues 219–331 (FRRKDREDSP…SSGDLVDLFD (113 aa)) are disordered. Residues 222–239 (KDREDSPERCSDSDEEKK) are compositionally biased toward basic and acidic residues. Residues 300-310 (PDQNASTHTPQ) show a composition bias toward polar residues. T308 carries the post-translational modification Phosphothreonine. Residues 311–323 (SSLKTSVPSSKSS) are compositionally biased toward low complexity. S312 and S642 each carry phosphoserine.

Belongs to the epsin family. In terms of assembly, binds clathrin heavy chain and AP-2. Interacts with VTI1B. Interacts with GGA2 (via GAE domain). Interacts with AP1G1 (via GAE domain). Interacts with AP1G2 (via GAE domain).

The protein localises to the cytoplasm. Its subcellular location is the perinuclear region. It localises to the membrane. It is found in the cytoplasmic vesicle. The protein resides in the clathrin-coated vesicle. Functionally, binds to membranes enriched in phosphatidylinositol 4,5-bisphosphate (PtdIns(4,5)P2). May have a role in transport via clathrin-coated vesicles from the trans-Golgi network to endosomes. Stimulates clathrin assembly. The polypeptide is Clathrin interactor 1 (CLINT1) (Bos taurus (Bovine)).